A 336-amino-acid polypeptide reads, in one-letter code: Fructose-1,6-bisphosphatase class 1 (336 aa).

4 residues coordinate Mg(2+): Glu90, Asp112, Leu114, and Asp115. Substrate is bound by residues 115–118 (DGSS), Asn211, and Lys277. Glu283 serves as a coordination point for Mg(2+).

Belongs to the FBPase class 1 family. Homotetramer. The cofactor is Mg(2+).

Its subcellular location is the cytoplasm. It carries out the reaction beta-D-fructose 1,6-bisphosphate + H2O = beta-D-fructose 6-phosphate + phosphate. It functions in the pathway carbohydrate biosynthesis; gluconeogenesis. The protein is Fructose-1,6-bisphosphatase class 1 of Pseudomonas putida (strain ATCC 700007 / DSM 6899 / JCM 31910 / BCRC 17059 / LMG 24140 / F1).